A 281-amino-acid chain; its full sequence is Probable replication-associated protein repA1 (281 aa).

This sequence belongs to the IncFII RepA family.

Functionally, this protein is essential for plasmid replication; it is involved in copy control functions. This chain is Probable replication-associated protein repA1 (repA1), found in Buchnera aphidicola subsp. Cinara cedri (strain Cc).